The primary structure comprises 929 residues: MDSKYNPVSIEQKWQKNWAEQNQDQTPINNNQPKFYALSMFPYPSGNLHMGHVRNYTITDVIARLKRMQGYRVLHPMGWDAFGLPAENAAIDRGIPPAKWTLENIAQMKEQLRRLGFSIDWDKEVATCTPEYYRWTQWIFLQFFQAGLAYQKESAVNWDPIDQTVLANEQVDGEGRSWRSGAKVERKMLRQWFFKITDYAEQLLNDLDKLPGWPERVKLMQANWIGKSVGAYLEFPIVGMDQKIGVFTTRPDTVYGVSYVVLAPEHPLTAKVTTPEQQITVETFIKEVAAESELERTAEDKPKRGVPTGGKAINPFNNQEVPIWIADYVLYEYGTGAVMGVPAHDVRDFQFAKQYNLPIKTVIVPDDSNDDHKLTEAYTDVGVMVNSGPFNGEKSTVAKKAIIELAEDEGYGKGRVQYRLRDWLISRQRYWGAPIPIIHCPKCGAVPVPDEDLPVKLPESVEFSGRGPSPLAKLEDWVNVSCPSCGTPAKRETDTMDTFIDSSWYYLRYPDATNEEQVFDSKIVNDWLPVDQYVGGIEHAILHLLYSRFFTKVLRDRGLCDFDEPFQNLLTQGMVQGVTYKNPVTGKYIPFADVNPQEPKDPKTGDKLEVFFEKMSKSKYNGVDPMDVMATYGADTARMFILFKAPPEKDLEWDDADVQGQFRFLNRVWSMVMEFLANHSFSELKAKHHGITQADLKDLGWSRYLITEITKNISAFKLRNVVKVYPVEDVLVAIEAKFNYSETQQETKDDLQKVLTWIKSRFGGELTKAEKDVRRAVHNAIKEVTEDLDGDYQFNTAVSEMMKLSNALGDASCKDSPIYAEALETLLLLLAPFAPHITEELWQIAGNFGSVHTHAWPKFDPEALVVDEITLVIQIKGKTRGTIQVPAQADKETLEKLARESDIAQRHLAGKEIKKVIVVPRKLVNFVVI.

The short motif at proline 42 to histidine 52 is the 'HIGH' region element. Positions lysine 614–serine 618 match the 'KMSKS' region motif. Lysine 617 lines the ATP pocket.

Belongs to the class-I aminoacyl-tRNA synthetase family.

Its subcellular location is the cytoplasm. The catalysed reaction is tRNA(Leu) + L-leucine + ATP = L-leucyl-tRNA(Leu) + AMP + diphosphate. The sequence is that of Leucine--tRNA ligase from Trichodesmium erythraeum (strain IMS101).